Reading from the N-terminus, the 476-residue chain is Carbamoyl phosphate synthase arginine-specific small chain (476 aa).

The N-terminal 24 residues, 1 to 24 (MFSHLLKPAARSAGLLGHVNRRYL), are a transit peptide targeting the mitochondrion. Positions 228 to 415 (HVALIDCGVK…IQNVQRYKDH (188 aa)) constitute a Glutamine amidotransferase type-1 domain. The Nucleophile role is filled by Cys-304. Catalysis depends on residues His-388 and Glu-390.

This sequence belongs to the CarA family. Heterodimer composed of 2 chains; the small (or glutamine) chain promotes the hydrolysis of glutamine to ammonia, which is used by the large (or ammonia) chain to synthesize carbamoyl phosphate.

It localises to the mitochondrion matrix. The catalysed reaction is hydrogencarbonate + L-glutamine + 2 ATP + H2O = carbamoyl phosphate + L-glutamate + 2 ADP + phosphate + 2 H(+). It catalyses the reaction L-glutamine + H2O = L-glutamate + NH4(+). It functions in the pathway amino-acid biosynthesis; L-arginine biosynthesis; carbamoyl phosphate from bicarbonate: step 1/1. In terms of biological role, small subunit of the arginine-specific carbamoyl phosphate synthase (CPSase). CPSase catalyzes the formation of carbamoyl phosphate from the ammonia moiety of glutamine, carbonate, and phosphate donated by ATP, the first step of the arginine biosynthetic pathway. The small subunit (glutamine amidotransferase) binds and cleaves glutamine to supply the large subunit with the substrate ammonia. The chain is Carbamoyl phosphate synthase arginine-specific small chain (CPA1) from Phaeosphaeria nodorum (strain SN15 / ATCC MYA-4574 / FGSC 10173) (Glume blotch fungus).